The chain runs to 467 residues: Proton extrusion protein PxcA (467 aa).

Polar residues predominate over residues 146–161; it reads SQVRTTSSQPPENPSL. 2 disordered regions span residues 146 to 167 and 186 to 205; these read SQVR…ALRT and PQLI…KADT. Positions 191-203 are enriched in basic and acidic residues; that stretch reads QRTEQSKKSRGKA. 4 helical membrane passes run 249 to 269, 352 to 372, 391 to 411, and 427 to 447; these read FILL…ALIV, IFSV…IMVL, IIIL…WEVI, and FIFL…KYWI.

Belongs to the CemA family.

It is found in the cell inner membrane. Functionally, required for H(+) efflux immediately after light irradiation to form a rapid H(+) concentration gradient across the thylakoid membranes. Together with PxcL, contributes to transient H(+) uptake following dark to light transition. In Nostoc sp. (strain PCC 7120 / SAG 25.82 / UTEX 2576), this protein is Proton extrusion protein PxcA.